The chain runs to 736 residues: Catalase-peroxidase (736 aa).

Residues 1–10 (MDAKTDDKGA) are compositionally biased toward basic and acidic residues. The segment at 1–26 (MDAKTDDKGAGKCPFSGGSHGHRNRD) is disordered. The segment at residues 96-218 (WHSAGTYRIT…LGAVQMGLIY (123 aa)) is a cross-link (tryptophyl-tyrosyl-methioninium (Trp-Tyr) (with M-244)). The active-site Proton acceptor is the His-97. A cross-link (tryptophyl-tyrosyl-methioninium (Tyr-Met) (with W-96)) is located at residues 218–244 (YVNPEGPNGNPDPVAAAKDIRETFARM). Heme b is bound at residue His-259.

The protein belongs to the peroxidase family. Peroxidase/catalase subfamily. Homodimer or homotetramer. Requires heme b as cofactor. In terms of processing, formation of the three residue Trp-Tyr-Met cross-link is important for the catalase, but not the peroxidase activity of the enzyme.

The catalysed reaction is H2O2 + AH2 = A + 2 H2O. It carries out the reaction 2 H2O2 = O2 + 2 H2O. Functionally, bifunctional enzyme with both catalase and broad-spectrum peroxidase activity. This chain is Catalase-peroxidase, found in Rhodopseudomonas palustris (strain ATCC BAA-98 / CGA009).